A 232-amino-acid polypeptide reads, in one-letter code: 5'-methylthioadenosine/S-adenosylhomocysteine nucleosidase (232 aa).

Glu12 serves as the catalytic Proton acceptor. Substrate is bound by residues Gly78, Val152, and 173 to 174; that span reads ME. Asp197 (proton donor) is an active-site residue.

The protein belongs to the PNP/UDP phosphorylase family. MtnN subfamily. In terms of assembly, homodimer.

The enzyme catalyses S-adenosyl-L-homocysteine + H2O = S-(5-deoxy-D-ribos-5-yl)-L-homocysteine + adenine. It catalyses the reaction S-methyl-5'-thioadenosine + H2O = 5-(methylsulfanyl)-D-ribose + adenine. The catalysed reaction is 5'-deoxyadenosine + H2O = 5-deoxy-D-ribose + adenine. It functions in the pathway amino-acid biosynthesis; L-methionine biosynthesis via salvage pathway; S-methyl-5-thio-alpha-D-ribose 1-phosphate from S-methyl-5'-thioadenosine (hydrolase route): step 1/2. Functionally, catalyzes the irreversible cleavage of the glycosidic bond in both 5'-methylthioadenosine (MTA) and S-adenosylhomocysteine (SAH/AdoHcy) to adenine and the corresponding thioribose, 5'-methylthioribose and S-ribosylhomocysteine, respectively. Also cleaves 5'-deoxyadenosine, a toxic by-product of radical S-adenosylmethionine (SAM) enzymes, into 5-deoxyribose and adenine. Thus, is required for in vivo function of the radical SAM enzymes biotin synthase and lipoic acid synthase, that are inhibited by 5'-deoxyadenosine accumulation. The polypeptide is 5'-methylthioadenosine/S-adenosylhomocysteine nucleosidase (Buchnera aphidicola subsp. Acyrthosiphon pisum (strain APS) (Acyrthosiphon pisum symbiotic bacterium)).